Reading from the N-terminus, the 285-residue chain is N-alpha-acetyltransferase 40 (285 aa).

One can recognise an N-acetyltransferase domain in the interval 88–274 (INYKLHKSRG…GGGRVVVPCD (187 aa)). Residues Y116, 163-165 (TEE), and Y185 contribute to the substrate site. Residues 187-189 (VHV) and 195-200 (GHGIGR) each bind acetyl-CoA. T228 lines the substrate pocket. N233 provides a ligand contact to acetyl-CoA.

Belongs to the acetyltransferase family. NAA40 subfamily.

It is found in the nucleus. It localises to the cytoplasm. The catalysed reaction is N-terminal L-seryl-[histone H4] + acetyl-CoA = N-terminal N(alpha)-acetyl-L-seryl-[histone H4] + CoA + H(+). The enzyme catalyses N-terminal L-seryl-[histone H2A] + acetyl-CoA = N-terminal N(alpha)-acetyl-L-seryl-[histone H2A] + CoA + H(+). N-alpha-acetyltransferase that specifically mediates the acetylation of the N-terminal residues of histones H4 and H2A. This Saccharomyces cerevisiae (strain ATCC 204508 / S288c) (Baker's yeast) protein is N-alpha-acetyltransferase 40.